The chain runs to 545 residues: ATP synthase subunit alpha (545 aa).

Residue 173 to 180 coordinates ATP; sequence GDRQTGKS.

It belongs to the ATPase alpha/beta chains family. As to quaternary structure, F-type ATPases have 2 components, CF(1) - the catalytic core - and CF(0) - the membrane proton channel. CF(1) has five subunits: alpha(3), beta(3), gamma(1), delta(1), epsilon(1). CF(0) has three main subunits: a(1), b(2) and c(9-12). The alpha and beta chains form an alternating ring which encloses part of the gamma chain. CF(1) is attached to CF(0) by a central stalk formed by the gamma and epsilon chains, while a peripheral stalk is formed by the delta and b chains.

Its subcellular location is the cell membrane. It catalyses the reaction ATP + H2O + 4 H(+)(in) = ADP + phosphate + 5 H(+)(out). Produces ATP from ADP in the presence of a proton gradient across the membrane. The alpha chain is a regulatory subunit. The sequence is that of ATP synthase subunit alpha from Arthrobacter sp. (strain FB24).